Reading from the N-terminus, the 305-residue chain is UDP-3-O-acyl-N-acetylglucosamine deacetylase (305 aa).

Residues histidine 79, histidine 238, and aspartate 242 each contribute to the Zn(2+) site. Histidine 265 serves as the catalytic Proton donor.

It belongs to the LpxC family. Zn(2+) is required as a cofactor.

The catalysed reaction is a UDP-3-O-[(3R)-3-hydroxyacyl]-N-acetyl-alpha-D-glucosamine + H2O = a UDP-3-O-[(3R)-3-hydroxyacyl]-alpha-D-glucosamine + acetate. Its pathway is glycolipid biosynthesis; lipid IV(A) biosynthesis; lipid IV(A) from (3R)-3-hydroxytetradecanoyl-[acyl-carrier-protein] and UDP-N-acetyl-alpha-D-glucosamine: step 2/6. Functionally, catalyzes the hydrolysis of UDP-3-O-myristoyl-N-acetylglucosamine to form UDP-3-O-myristoylglucosamine and acetate, the committed step in lipid A biosynthesis. The chain is UDP-3-O-acyl-N-acetylglucosamine deacetylase from Mannheimia succiniciproducens (strain KCTC 0769BP / MBEL55E).